We begin with the raw amino-acid sequence, 205 residues long: S-crystallin SL11 (205 aa).

The region spanning 2-80 is the GST N-terminal domain; that stretch reads PSYTLYYFNG…YLAREFGFYG (79 aa). Residues 82–205 form the GST C-terminal domain; the sequence is NNMDMFKVDC…YIKKRNNTAF (124 aa).

It belongs to the GST superfamily. Lens.

Its function is as follows. S-crystallins are structural components of squids and octopi eye lens. Contains relatively little if any GST activity. The polypeptide is S-crystallin SL11 (Nototodarus sloanii (Wellington flying squid)).